A 726-amino-acid polypeptide reads, in one-letter code: Catalase-peroxidase (726 aa).

The segment at residues 90–213 (WHAAGTYRIG…LAAVQMGLIY (124 aa)) is a cross-link (tryptophyl-tyrosyl-methioninium (Trp-Tyr) (with M-239)). The Proton acceptor role is filled by H91. The segment at residues 213–239 (YVNPEGPNGKPDPAAAARDIRETFARM) is a cross-link (tryptophyl-tyrosyl-methioninium (Tyr-Met) (with W-90)). H254 provides a ligand contact to heme b. The interval 338 to 359 (TPKGGAGAGTVPDAHDPSKRHA) is disordered.

The protein belongs to the peroxidase family. Peroxidase/catalase subfamily. In terms of assembly, homodimer or homotetramer. The cofactor is heme b. In terms of processing, formation of the three residue Trp-Tyr-Met cross-link is important for the catalase, but not the peroxidase activity of the enzyme.

It catalyses the reaction H2O2 + AH2 = A + 2 H2O. The enzyme catalyses 2 H2O2 = O2 + 2 H2O. In terms of biological role, bifunctional enzyme with both catalase and broad-spectrum peroxidase activity. In Bradyrhizobium sp. (strain ORS 278), this protein is Catalase-peroxidase.